The following is a 755-amino-acid chain: Cellulose synthase-like protein B4 (755 aa).

The next 2 membrane-spanning stretches (helical) occupy residues 24–44 (AVDL…ILHV) and 49–69 (TVWI…LLIT). Active-site residues include D136 and D461. A run of 6 helical transmembrane segments spans residues 533 to 556 (AYLY…LPAY), 569 to 589 (VYLG…LWEF), 615 to 635 (LFSV…VFIV), 674 to 694 (FLPG…CLVG), 702 to 722 (GSGL…LPFL), and 733 to 753 (IPFS…VLSV).

This sequence belongs to the glycosyltransferase 2 family. Plant cellulose synthase-like B subfamily.

The protein localises to the golgi apparatus membrane. In terms of biological role, thought to be a Golgi-localized beta-glycan synthase that polymerize the backbones of noncellulosic polysaccharides (hemicelluloses) of plant cell wall. The protein is Cellulose synthase-like protein B4 (CSLB4) of Arabidopsis thaliana (Mouse-ear cress).